We begin with the raw amino-acid sequence, 357 residues long: Cinnamyl alcohol dehydrogenase 1 (357 aa).

An Enoyl reductase (ER) domain is found at 20-348 (GILSPYTYTL…KNDVRYRFVV (329 aa)). A Zn(2+)-binding site is contributed by C47. Position 49 (S49) interacts with NADP(+). Residues H69, E70, C100, C103, C106, C114, and C163 each coordinate Zn(2+). NADP(+)-binding positions include T167, 188 to 193 (GLGGVG), 211 to 216 (SSSDKK), T251, G275, and 298 to 300 (SFI).

The protein belongs to the zinc-containing alcohol dehydrogenase family. Homodimer. It depends on Zn(2+) as a cofactor. In terms of tissue distribution, accumulates mainly in the placenta of red fruits, and, to a lower extent, in green fruits placenta, pericarp and seeds.

It localises to the cytoplasm. It carries out the reaction (E)-cinnamyl alcohol + NADP(+) = (E)-cinnamaldehyde + NADPH + H(+). It catalyses the reaction (E)-coniferol + NADP(+) = (E)-coniferaldehyde + NADPH + H(+). The catalysed reaction is (E)-sinapyl alcohol + NADP(+) = (E)-sinapaldehyde + NADPH + H(+). The enzyme catalyses (E)-4-coumaroyl alcohol + NADP(+) = (E)-4-coumaraldehyde + NADPH + H(+). It carries out the reaction (E)-caffeyl alcohol + NADP(+) = (E)-caffeyl aldehyde + NADPH + H(+). It catalyses the reaction vanillin + NADPH + H(+) = 4-hydroxy-3-methoxy-benzenemethanol + NADP(+). It functions in the pathway aromatic compound metabolism; phenylpropanoid biosynthesis. Its activity is regulated as follows. Inhibited, in a concentration-dependent manner, by N-(O-hydroxyphenyl) sulfinamoyltertiobutyl acetate (OHPAS), a specific cinnamyl alcohol dehydrogenase (CAD) inhibitor, as well as by ethylenediaminetetraacetic acid (EDTA), a metalloenzyme inhibitor. Involved in the biosynthesis of capsinoids natural products (e.g. capsiate), non-pungent alkaloids synthesized from phenylpropanoid intermediates in the placental tissue of sweet chili pepper fruit acting as repellant on herbivorous mammals. Catalyzes the reduction of vanillin to generate vanillyl alcohol, a precursor of capsiate, a non-pungent component that accumulates mainly in the placenta of mature red fruits, but also in green fruits to lower levels. Involved in lignin biosynthesis. Catalyzes the final step specific for the production of lignin monomers. Mediates the conversion of cinnamaldehyde and coniferaldehyde to cinnamyl alcohol and coniferyl alcohol, respectively. Catalyzes the NADPH-dependent reduction of 5-hydroxyconiferaldehyde, sinapaldehyde, 4-coumaraldehyde and caffeyl aldehyde to their respective alcohols. In Capsicum annuum (Capsicum pepper), this protein is Cinnamyl alcohol dehydrogenase 1.